Reading from the N-terminus, the 905-residue chain is MFSILKKLFGTANDRTVKKLFSEITKINSLEPAIKILSDAALKNKTVEFKEKLKNGATLDDILYEAFAVVREAASRVCGMRHFDVQLIGGLILHRGMIAEMRTGEGKTLVATLPAYLNALTGKGVHVVTVNDYLAIRDSASMGKIYNFLGLSVGCIVAGMTDEAKRIAYNSDITHATNNELGFDYLRDNMKYSMQERVLRPFNFAIIDEVDSILIDEARTPIVISGPVNDNSALYGKIDKIIRLLNDSDFEKDEKLKTINLTEVGITNIESLLIKDGIIKPDTGLYDFENLNLVHYVNQALRAHHMFTVDVDYLVREGKVMIIDEFTGRVMEGRRYSEGLHQALEAKENVKIQNENQTLASITFQNYFRNYHKLSGMTGTSMTEASELKDIYNLDVVAVPTHNKVTRIDLDDEIYGSKQEKYDAILKLIRDCYNRGQPILVGTISIEKSEELSSILNKEKIPHNVLNAKFHEQEAFIIAQAGRFKAVTIATNMAGRGTDIMLGGNPEMLIEQLNKDRNYVAKTAEIKAQIAEEKQKVIETGGLFVIGTERHESRRIDNQLRGRSGRQGDPGKTQFFLSLDDDLMRIFASDRISGVLRTLGLKNGEAIHHPMISRSLEKAQQKVEAHNYEMRKNLLRFDDVMNDQRKIIYEQRTEIIKSKDSYGFLNSTTEELARKIVLTFMPLGSYREDWDIDNLTVELHRIFSIKFDHNLVHKNDVTEEDITKLVIQMAHDIYKSKEEAYSSELMNNAVKYILLTTLDQVWKDHLYSLDHLRQGISLRAYAQKDPLSEYKREAFNLFEQMLNNLKELFIQTVYHFHIDLRHLQKEDISLEHKKLQKNMCESREDPAFSKYNAGNSIETYLKPVVLRVDPKDRKPDDPMSWGRVSRNELCPCGSGKKYKYCHGAN.

Residues glutamine 86, 104-108 (GEGKT), and aspartate 499 contribute to the ATP site. Zn(2+) contacts are provided by cysteine 890, cysteine 892, cysteine 901, and histidine 902.

The protein belongs to the SecA family. Monomer and homodimer. Part of the essential Sec protein translocation apparatus which comprises SecA, SecYEG and auxiliary proteins SecDF-YajC and YidC. The cofactor is Zn(2+).

It localises to the cell inner membrane. Its subcellular location is the cytoplasm. It catalyses the reaction ATP + H2O + cellular proteinSide 1 = ADP + phosphate + cellular proteinSide 2.. Functionally, part of the Sec protein translocase complex. Interacts with the SecYEG preprotein conducting channel. Has a central role in coupling the hydrolysis of ATP to the transfer of proteins into and across the cell membrane, serving both as a receptor for the preprotein-SecB complex and as an ATP-driven molecular motor driving the stepwise translocation of polypeptide chains across the membrane. The protein is Protein translocase subunit SecA of Rickettsia typhi (strain ATCC VR-144 / Wilmington).